The sequence spans 203 residues: Thymidylate kinase (203 aa).

7–14 (GGEGAGKT) is a binding site for ATP.

The protein belongs to the thymidylate kinase family.

The enzyme catalyses dTMP + ATP = dTDP + ADP. Its function is as follows. Phosphorylation of dTMP to form dTDP in both de novo and salvage pathways of dTTP synthesis. In Chlamydia muridarum (strain MoPn / Nigg), this protein is Thymidylate kinase (tmk).